The primary structure comprises 343 residues: MKLAVVLFNLGGPDGPEAVRPFLFNLFRDPAIIGLPAIARYPLAALISTTREKTAQANYAIMGGRSPLLPETEAQARALEAELARRAPDVEARAFIAMRYWRPLAKETARQVAAFAPDEIVLLPLYPQYSTTTTGSSVKDWARAYKGPGKSRTVCCYPNAPGLAEAHARLIRQTWEKAGKPSDIRLLFSAHGLPQKVVDAGDPYEAQVQASAAAVAALLPEFTDWGISYQSRVGPLKWLGPATDDEVRRAGAEGKGLLVSPIAFVSEHVETLVELDHEYAALAKESGVPVYLRAPAPGVAEPFIGTLAEAALGALDRSGAAPFGPWLCPAAHGRCACRNGGTA.

2 residues coordinate Fe cation: histidine 191 and glutamate 270.

The protein belongs to the ferrochelatase family.

Its subcellular location is the cytoplasm. It carries out the reaction heme b + 2 H(+) = protoporphyrin IX + Fe(2+). It functions in the pathway porphyrin-containing compound metabolism; protoheme biosynthesis; protoheme from protoporphyrin-IX: step 1/1. In terms of biological role, catalyzes the ferrous insertion into protoporphyrin IX. In Phenylobacterium zucineum (strain HLK1), this protein is Ferrochelatase.